Here is a 389-residue protein sequence, read N- to C-terminus: Cytochrome oxidase assembly protein SHY1 (389 aa).

Residues 1-71 (MSLLGARSTY…SRRERSFGKK (71 aa)) lie on the Mitochondrial matrix side of the membrane. The helical transmembrane segment at 72–92 (IVLGLMFAMPIISFYLGTWQV) threads the bilayer. Over 93-341 (RRLKWKTKLI…KPTIDLKNNH (249 aa)) the chain is Mitochondrial intermembrane. Residues 292-311 (GTQAVDNNTSKPRSRQEMPT) are disordered. A helical membrane pass occupies residues 342–362 (LQYLVTWYGLSFLSTIFLIVA). Residues 363-389 (LRKAKRGGVVSQDQLMKEKLKHSRKYM) lie on the Mitochondrial matrix side of the membrane.

Belongs to the SURF1 family. In terms of assembly, interacts with COA1, COX14 and MSS51.

The protein localises to the mitochondrion inner membrane. In terms of biological role, required for efficient assembly of cytochrome c oxidase in the mitochondrial inner membrane. Involved in a step that couples MSS51-COX14-dependent regulation of COX1 translation to early steps of cytochrome c oxidase assembly. This Saccharomyces cerevisiae (strain ATCC 204508 / S288c) (Baker's yeast) protein is Cytochrome oxidase assembly protein SHY1 (SHY1).